A 94-amino-acid polypeptide reads, in one-letter code: Acylphosphatase (94 aa).

One can recognise an Acylphosphatase-like domain in the interval 8–94; sequence RFTARVVGRV…QGDLADFRRK (87 aa). Catalysis depends on residues arginine 23 and asparagine 41.

This sequence belongs to the acylphosphatase family.

It carries out the reaction an acyl phosphate + H2O = a carboxylate + phosphate + H(+). The sequence is that of Acylphosphatase (acyP) from Frankia alni (strain DSM 45986 / CECT 9034 / ACN14a).